The primary structure comprises 55 residues: ATP synthase protein 8 (55 aa).

A helical membrane pass occupies residues 6–26 (PHPWFAILVFSWIFFLVILPK).

It belongs to the ATPase protein 8 family. F-type ATPases have 2 components, CF(1) - the catalytic core - and CF(0) - the membrane proton channel.

The protein resides in the mitochondrion membrane. Functionally, mitochondrial membrane ATP synthase (F(1)F(0) ATP synthase or Complex V) produces ATP from ADP in the presence of a proton gradient across the membrane which is generated by electron transport complexes of the respiratory chain. F-type ATPases consist of two structural domains, F(1) - containing the extramembraneous catalytic core and F(0) - containing the membrane proton channel, linked together by a central stalk and a peripheral stalk. During catalysis, ATP synthesis in the catalytic domain of F(1) is coupled via a rotary mechanism of the central stalk subunits to proton translocation. Part of the complex F(0) domain. Minor subunit located with subunit a in the membrane. In Squalus acanthias (Spiny dogfish), this protein is ATP synthase protein 8 (MT-ATP8).